The primary structure comprises 532 residues: uncharacterized protein (532 aa).

Helical transmembrane passes span 13–33, 53–73, 80–100, 111–131, 142–162, 169–189, 203–223, 231–251, 273–293, 306–326, 334–354, 361–381, and 483–503; these read MSLL…QTLL, WLTT…AFLI, SLFL…GIAP, IQAV…LLIF, IFGL…GWII, IMFY…FFIF, LGAI…SEAG, IVLS…VQQL, VINI…PIYL, LLLL…GILF, LAII…QLTI, IMLI…PVMT, and INDA…LSIF.

Belongs to the major facilitator superfamily. EmrB family.

It is found in the cell membrane. This is an uncharacterized protein from Bacillus subtilis (strain 168).